A 339-amino-acid chain; its full sequence is Small ribosomal subunit protein mS27 (339 aa).

The N-terminal 37 residues, 1–37 (MGTITVVINEGPILLIRALHRATTNKKMFRSTVWRRF), are a transit peptide targeting the mitochondrion.

This sequence belongs to the mitochondrion-specific ribosomal protein mS27 family. In terms of assembly, component of the mitochondrial small ribosomal subunit (mt-SSU). Mature yeast 74S mitochondrial ribosomes consist of a small (37S) and a large (54S) subunit. The 37S small subunit contains a 15S ribosomal RNA (15S mt-rRNA) and 34 different proteins. The 54S large subunit contains a 21S rRNA (21S mt-rRNA) and 46 different proteins.

The protein resides in the mitochondrion. Its function is as follows. Component of the mitochondrial ribosome (mitoribosome), a dedicated translation machinery responsible for the synthesis of mitochondrial genome-encoded proteins, including at least some of the essential transmembrane subunits of the mitochondrial respiratory chain. The mitoribosomes are attached to the mitochondrial inner membrane and translation products are cotranslationally integrated into the membrane. The protein is Small ribosomal subunit protein mS27 (MRP13) of Saccharomyces cerevisiae (strain ATCC 204508 / S288c) (Baker's yeast).